We begin with the raw amino-acid sequence, 429 residues long: Actin-like protein 6A (429 aa).

S2 carries the N-acetylserine modification. K62 is covalently cross-linked (Glycyl lysine isopeptide (Lys-Gly) (interchain with G-Cter in SUMO2)). S86 and S233 each carry phosphoserine.

The protein belongs to the actin family. As to quaternary structure, component of numerous complexes with chromatin remodeling and histone acetyltransferase activity. Component of the NuA4 histone acetyltransferase complex which contains the catalytic subunit KAT5/TIP60 and the subunits EP400, TRRAP/PAF400, BRD8/SMAP, EPC1, DMAP1/DNMAP1, RUVBL1/TIP49, RUVBL2, ING3, actin, ACTL6A/BAF53A, MORF4L1/MRG15, MORF4L2/MRGX, MRGBP, YEATS4/GAS41, VPS72/YL1 and MEAF6. The NuA4 complex interacts with MYC and the adenovirus E1A protein. Component of a NuA4-related complex which contains EP400, TRRAP/PAF400, SRCAP, BRD8/SMAP, EPC1, DMAP1/DNMAP1, RUVBL1/TIP49, RUVBL2, actin, ACTL6A/BAF53A, VPS72 and YEATS4/GAS41. Component of the multiprotein chromatin-remodeling complexes SWI/SNF: SWI/SNF-A (BAF), SWI/SNF-B (PBAF) and related complexes. The canonical complex contains a catalytic subunit (either SMARCA4/BRG1/BAF190A or SMARCA2/BRM/BAF190B) and at least SMARCE1, ACTL6A/BAF53, SMARCC1/BAF155, SMARCC2/BAF170, and SMARCB1/SNF5/BAF47. Other subunits specific to each of the complexes may also be present permitting several possible combinations developmentally and tissue specific. Component of the BAF complex, which includes at least actin (ACTB), ARID1A/BAF250A, ARID1B/BAF250B, SMARCA2/BRM, SMARCA4/BRG1/BAF190A, ACTL6A/BAF53, ACTL6B/BAF53B, SMARCE1/BAF57, SMARCC1/BAF155, SMARCC2/BAF170, SMARCB1/SNF5/INI1, and one or more SMARCD1/BAF60A, SMARCD2/BAF60B, or SMARCD3/BAF60C. In muscle cells, the BAF complex also contains DPF3. Component of the BAF53 complex, at least composed of ACTL6A/BAF53A, RUVBL1/TIP49, SMARCA2/BRM/BAF190B and TRRAP/PAF400, and which may also include a HAT activity related to, but distinct from, that of KAT5. Component of neural progenitors-specific chromatin remodeling complex (npBAF complex) composed of at least, ARID1A/BAF250A or ARID1B/BAF250B, SMARCD1/BAF60A, SMARCD3/BAF60C, SMARCA2/BRM/BAF190B, SMARCA4/BRG1/BAF190A, SMARCB1/BAF47, SMARCC1/BAF155, SMARCE1/BAF57, SMARCC2/BAF170, PHF10/BAF45A, ACTL6A/BAF53A and actin. Component of SWI/SNF (GBAF) subcomplex, which includes at least BICRA or BICRAL (mutually exclusive), BRD9, SS18, SMARCA2/BRM, SMARCA4/BRG1/BAF190A, ACTL6A/BAF53, SMARCC1/BAF155, and SMARCD1/BAF60A. May be a component of the SWI/SNF-B (PBAF) chromatin remodeling complex, at least composed of SMARCA4/BRG1, SMARCB1/BAF47/SNF5, ACTL6A/BAF53A or ACTL6B/BAF53B, SMARCE1/BAF57, SMARCD1/BAF60A, SMARCD2/BAF60B, perhaps SMARCD3/BAF60C, SMARCC1/BAF155, SMARCC2/BAF170, PBRM1/BAF180, ARID2/BAF200 and actin. Interacts with SMARCA4/BRG1/BAF190A. Interacts with PHF10/BAF45A. Component of the chromatin remodeling INO80 complex; specifically part of a complex module associated with the DBINO domain of INO80. Interacts with DPF2. In terms of tissue distribution, widely expressed. Expressed selectively in neural stem and progenitor cells (at protein level).

The protein localises to the nucleus. Involved in transcriptional activation and repression of select genes by chromatin remodeling (alteration of DNA-nucleosome topology). Component of SWI/SNF chromatin remodeling complexes that carry out key enzymatic activities, changing chromatin structure by altering DNA-histone contacts within a nucleosome in an ATP-dependent manner. Required for maximal ATPase activity of SMARCA4/BRG1/BAF190A and for association of the SMARCA4/BRG1/BAF190A containing remodeling complex BAF with chromatin/nuclear matrix. Belongs to the neural progenitors-specific chromatin remodeling complex (npBAF complex) and is required for the proliferation of neural progenitors. During neural development a switch from a stem/progenitor to a postmitotic chromatin remodeling mechanism occurs as neurons exit the cell cycle and become committed to their adult state. The transition from proliferating neural stem/progenitor cells to postmitotic neurons requires a switch in subunit composition of the npBAF and nBAF complexes. As neural progenitors exit mitosis and differentiate into neurons, npBAF complexes which contain ACTL6A/BAF53A and PHF10/BAF45A, are exchanged for homologous alternative ACTL6B/BAF53B and DPF1/BAF45B or DPF3/BAF45C subunits in neuron-specific complexes (nBAF). The npBAF complex is essential for the self-renewal/proliferative capacity of the multipotent neural stem cells. The nBAF complex along with CREST plays a role regulating the activity of genes essential for dendrite growth. Component of the NuA4 histone acetyltransferase (HAT) complex which is involved in transcriptional activation of select genes principally by acetylation of nucleosomal histones H4 and H2A. This modification may both alter nucleosome - DNA interactions and promote interaction of the modified histones with other proteins which positively regulate transcription. This complex may be required for the activation of transcriptional programs associated with oncogene and proto-oncogene mediated growth induction, tumor suppressor mediated growth arrest and replicative senescence, apoptosis, and DNA repair. NuA4 may also play a direct role in DNA repair when recruited to sites of DNA damage. Putative core component of the chromatin remodeling INO80 complex which is involved in transcriptional regulation, DNA replication and probably DNA repair. This chain is Actin-like protein 6A (Actl6a), found in Mus musculus (Mouse).